Reading from the N-terminus, the 201-residue chain is Acyl-homoserine-lactone synthase (201 aa).

This sequence belongs to the autoinducer synthase family.

The catalysed reaction is a fatty acyl-[ACP] + S-adenosyl-L-methionine = an N-acyl-L-homoserine lactone + S-methyl-5'-thioadenosine + holo-[ACP] + H(+). Functionally, required for the synthesis of PAI consisting of 3-oxo-N-(tetrahydro-2-oxo-3-furanyl)-dodecanamide also known as N-(3-oxododecanoyl)homoserine lactone, an autoinducer molecule which binds to LasR and thus acts in elastase biosynthesis regulation. In Pseudomonas aeruginosa (strain ATCC 15692 / DSM 22644 / CIP 104116 / JCM 14847 / LMG 12228 / 1C / PRS 101 / PAO1), this protein is Acyl-homoserine-lactone synthase (lasI).